The following is a 1157-amino-acid chain: DNA-directed RNA polymerase subunit beta (1157 aa).

This sequence belongs to the RNA polymerase beta chain family. In terms of assembly, the RNAP catalytic core consists of 2 alpha, 1 beta, 1 beta' and 1 omega subunit. When a sigma factor is associated with the core the holoenzyme is formed, which can initiate transcription.

The catalysed reaction is RNA(n) + a ribonucleoside 5'-triphosphate = RNA(n+1) + diphosphate. Its function is as follows. DNA-dependent RNA polymerase catalyzes the transcription of DNA into RNA using the four ribonucleoside triphosphates as substrates. The polypeptide is DNA-directed RNA polymerase subunit beta (Tropheryma whipplei (strain Twist) (Whipple's bacillus)).